The primary structure comprises 534 residues: Membrane-bound lytic murein transglycosylase F (534 aa).

The signal sequence occupies residues 1 to 24 (MQISQFNRLKRSALLFASVLLLSA). The non-LT domain stretch occupies residues 25 to 285 (CQIESEPKSE…TLEEKYIGHI (261 aa)). The interval 287–534 (AFDYVDTRAF…AEQTPVPKAE (248 aa)) is LT domain. E330 is an active-site residue. Residues 507–534 (VSGAVEVTPPPEENAPQEAEQTPVPKAE) form a disordered region. The segment covering 520-534 (NAPQEAEQTPVPKAE) has biased composition (low complexity).

This sequence in the N-terminal section; belongs to the bacterial solute-binding protein 3 family. It in the C-terminal section; belongs to the transglycosylase Slt family.

The protein localises to the cell outer membrane. It catalyses the reaction Exolytic cleavage of the (1-&gt;4)-beta-glycosidic linkage between N-acetylmuramic acid (MurNAc) and N-acetylglucosamine (GlcNAc) residues in peptidoglycan, from either the reducing or the non-reducing ends of the peptidoglycan chains, with concomitant formation of a 1,6-anhydrobond in the MurNAc residue.. Murein-degrading enzyme that degrades murein glycan strands and insoluble, high-molecular weight murein sacculi, with the concomitant formation of a 1,6-anhydromuramoyl product. Lytic transglycosylases (LTs) play an integral role in the metabolism of the peptidoglycan (PG) sacculus. Their lytic action creates space within the PG sacculus to allow for its expansion as well as for the insertion of various structures such as secretion systems and flagella. The chain is Membrane-bound lytic murein transglycosylase F from Vibrio campbellii (strain ATCC BAA-1116).